The following is a 316-amino-acid chain: Coiled-coil domain-containing protein 42 (316 aa).

2 coiled-coil regions span residues 39–146 and 178–232; these read SPSI…SAKL and LVSM…DRAR.

The protein belongs to the CFAP73 family. Interacts with ODF1 and ODF2. Interacts with CCDC38. Interacts with CCDC146. Interacts with CFAP53.

The protein resides in the cytoplasm. It is found in the perinuclear region. Its subcellular location is the cytoskeleton. The protein localises to the cell projection. It localises to the cilium. The protein resides in the flagellum. It is found in the microtubule organizing center. Its subcellular location is the centrosome. Its function is as follows. Essential for male fertility. Required for sperm development. In Homo sapiens (Human), this protein is Coiled-coil domain-containing protein 42.